The following is a 398-amino-acid chain: Putative molybdopterin biosynthesis protein MJ0666 (398 aa).

The protein belongs to the MoeA family.

It participates in cofactor biosynthesis; molybdopterin biosynthesis. This Methanocaldococcus jannaschii (strain ATCC 43067 / DSM 2661 / JAL-1 / JCM 10045 / NBRC 100440) (Methanococcus jannaschii) protein is Putative molybdopterin biosynthesis protein MJ0666.